A 184-amino-acid chain; its full sequence is UPF0215 protein MJ1150 (184 aa).

Belongs to the UPF0215 family.

This chain is UPF0215 protein MJ1150, found in Methanocaldococcus jannaschii (strain ATCC 43067 / DSM 2661 / JAL-1 / JCM 10045 / NBRC 100440) (Methanococcus jannaschii).